The primary structure comprises 533 residues: Probable nucleolar protein 5-2 (533 aa).

The region spanning 281-399 (IAPNLTALVG…LEARLRNLEG (119 aa)) is the Nop domain. Disordered stretches follow at residues 401–433 (DLGR…ITPA) and 445–533 (GETS…KSKD). A compositionally biased stretch (basic and acidic residues) spans 413-424 (PKIEVYNKDKKM). Basic residues predominate over residues 521–533 (KKDKKEKKKKSKD).

It belongs to the NOP5/NOP56 family.

The protein resides in the nucleus. The protein localises to the nucleolus. In terms of biological role, required for 60S ribosomal subunit biogenesis. The polypeptide is Probable nucleolar protein 5-2 (NOP5-2) (Arabidopsis thaliana (Mouse-ear cress)).